Consider the following 2291-residue polypeptide: Protein Ycf2 A (2291 aa).

Position 1642 to 1649 (1642 to 1649 (GSIGTGRS)) interacts with ATP.

Belongs to the Ycf2 family.

The protein localises to the plastid. The protein resides in the chloroplast stroma. Functionally, probable ATPase of unknown function. Its presence in a non-photosynthetic plant (Epifagus virginiana) and experiments in tobacco indicate that it has an essential function which is probably not related to photosynthesis. This Atropa belladonna (Belladonna) protein is Protein Ycf2 A (ycf2-A).